The chain runs to 283 residues: uncharacterized protein (283 aa).

The segment covering 208–232 has biased composition (basic and acidic residues); that stretch reads SMENKVNETQNSKEDEKKKNDGDGK. Residues 208–237 are disordered; it reads SMENKVNETQNSKEDEKKKNDGDGKRSKKK.

This is an uncharacterized protein from Saccharomyces cerevisiae (strain ATCC 204508 / S288c) (Baker's yeast).